Consider the following 281-residue polypeptide: Large ribosomal subunit protein uL2 (281 aa).

Disordered stretches follow at residues 1–23 and 224–281; these read MAVKHYKPVTNGRRNMSSLDYSK and RGSV…KDSK. The span at 12–23 shows a compositional bias: polar residues; sequence GRRNMSSLDYSK. Residues 261-281 show a composition bias toward basic residues; that stretch reads KTRKTKKSSTKLILRRRKDSK.

The protein belongs to the universal ribosomal protein uL2 family. In terms of assembly, part of the 50S ribosomal subunit. Forms a bridge to the 30S subunit in the 70S ribosome.

One of the primary rRNA binding proteins. Required for association of the 30S and 50S subunits to form the 70S ribosome, for tRNA binding and peptide bond formation. It has been suggested to have peptidyltransferase activity; this is somewhat controversial. Makes several contacts with the 16S rRNA in the 70S ribosome. This is Large ribosomal subunit protein uL2 from Mycoplasmopsis agalactiae (strain NCTC 10123 / CIP 59.7 / PG2) (Mycoplasma agalactiae).